We begin with the raw amino-acid sequence, 403 residues long: Cytoplasmic tRNA 2-thiolation protein 2 (403 aa).

It belongs to the CTU2/NCS2 family.

The protein localises to the cytoplasm. Its pathway is tRNA modification; 5-methoxycarbonylmethyl-2-thiouridine-tRNA biosynthesis. Its function is as follows. Plays a central role in 2-thiolation of mcm(5)S(2)U at tRNA wobble positions of tRNA(Lys), tRNA(Glu) and tRNA(Gln). May act by forming a heterodimer with NCS6/CTU1 that ligates sulfur from thiocarboxylated URM1 onto the uridine of tRNAs at wobble position. The sequence is that of Cytoplasmic tRNA 2-thiolation protein 2 from Drosophila ananassae (Fruit fly).